Here is a 379-residue protein sequence, read N- to C-terminus: Protein trichome birefringence-like 36 (379 aa).

The helical; Signal-anchor for type II membrane protein transmembrane segment at 8-24 threads the bilayer; the sequence is VLFLSLCLILGKVVLSQ. The GDS motif signature appears at 123 to 125; it reads GDS. Positions 353–367 match the DCXHWCLPGXXDXWN motif motif; the sequence is DCSHWCLPGVPDIWN.

Belongs to the PC-esterase family. TBL subfamily.

The protein localises to the membrane. Its function is as follows. May act as a bridging protein that binds pectin and other cell wall polysaccharides. Probably involved in maintaining esterification of pectins. May be involved in the specific O-acetylation of cell wall polymers. In Arabidopsis thaliana (Mouse-ear cress), this protein is Protein trichome birefringence-like 36 (TBL36).